The following is a 740-amino-acid chain: 1,4-alpha-glucan branching enzyme GlgB (740 aa).

The active-site Nucleophile is D414. E467 (proton donor) is an active-site residue.

Belongs to the glycosyl hydrolase 13 family. GlgB subfamily. In terms of assembly, monomer.

The catalysed reaction is Transfers a segment of a (1-&gt;4)-alpha-D-glucan chain to a primary hydroxy group in a similar glucan chain.. The protein operates within glycan biosynthesis; glycogen biosynthesis. Functionally, catalyzes the formation of the alpha-1,6-glucosidic linkages in glycogen by scission of a 1,4-alpha-linked oligosaccharide from growing alpha-1,4-glucan chains and the subsequent attachment of the oligosaccharide to the alpha-1,6 position. The protein is 1,4-alpha-glucan branching enzyme GlgB of Rhodospirillum rubrum (strain ATCC 11170 / ATH 1.1.1 / DSM 467 / LMG 4362 / NCIMB 8255 / S1).